We begin with the raw amino-acid sequence, 81 residues long: Cytochrome b559 subunit alpha (81 aa).

The helical transmembrane segment at 21-35 threads the bilayer; it reads VIHALTIPALFLAGW. Histidine 23 is a heme binding site.

Belongs to the PsbE/PsbF family. As to quaternary structure, heterodimer of an alpha subunit and a beta subunit. PSII is composed of 1 copy each of membrane proteins PsbA, PsbB, PsbC, PsbD, PsbE, PsbF, PsbH, PsbI, PsbJ, PsbK, PsbL, PsbM, PsbT, PsbX, PsbY, PsbZ, Psb30/Ycf12, peripheral proteins PsbO, CyanoQ (PsbQ), PsbU, PsbV and a large number of cofactors. It forms dimeric complexes. The cofactor is heme b.

Its subcellular location is the cellular thylakoid membrane. Functionally, this b-type cytochrome is tightly associated with the reaction center of photosystem II (PSII). PSII is a light-driven water:plastoquinone oxidoreductase that uses light energy to abstract electrons from H(2)O, generating O(2) and a proton gradient subsequently used for ATP formation. It consists of a core antenna complex that captures photons, and an electron transfer chain that converts photonic excitation into a charge separation. This is Cytochrome b559 subunit alpha from Synechococcus sp. (strain JA-3-3Ab) (Cyanobacteria bacterium Yellowstone A-Prime).